Consider the following 209-residue polypeptide: V-type ATP synthase subunit D (209 aa).

Belongs to the V-ATPase D subunit family.

Functionally, produces ATP from ADP in the presence of a proton gradient across the membrane. This is V-type ATP synthase subunit D (atpD) from Chlamydia pneumoniae (Chlamydophila pneumoniae).